We begin with the raw amino-acid sequence, 172 residues long: Ribosome maturation factor RimM (172 aa).

In terms of domain architecture, PRC barrel spans 96-168; it reads EGEFYYHQII…RVDVELMEGL (73 aa).

It belongs to the RimM family. As to quaternary structure, binds ribosomal protein uS19.

The protein resides in the cytoplasm. In terms of biological role, an accessory protein needed during the final step in the assembly of 30S ribosomal subunit, possibly for assembly of the head region. Essential for efficient processing of 16S rRNA. May be needed both before and after RbfA during the maturation of 16S rRNA. It has affinity for free ribosomal 30S subunits but not for 70S ribosomes. The polypeptide is Ribosome maturation factor RimM (Streptococcus pyogenes serotype M1).